Reading from the N-terminus, the 800-residue chain is Fibroblast growth factor receptor 3 (800 aa).

Positions 1–20 (MVPLCLLLYLATLVFPPVYS) are cleaved as a signal peptide. The Ig-like C2-type 1 domain maps to 21-122 (AHLLSPEPTD…YTVKVIDSLS (102 aa)). The Extracellular portion of the chain corresponds to 21-363 (AHLLSPEPTD…EMEREDDYAD (343 aa)). An intrachain disulfide couples Cys55 to Cys101. Asn77, Asn90, and Asn112 each carry an N-linked (GlcNAc...) asparagine glycan. A compositionally biased stretch (acidic residues) spans 124–136 (GDDEDYDEDEDEA). The interval 124-143 (GDDEDYDEDEDEAGNGNAEA) is disordered. Ig-like C2-type domains are found at residues 144 to 237 (PYWT…YQLD) and 246 to 348 (PILQ…AWLT). An intrachain disulfide couples Cys169 to Cys221. N-linked (GlcNAc...) asparagine glycosylation is found at Asn218, Asn255, Asn287, Asn308, and Asn321. Cys268 and Cys332 are oxidised to a cystine. Residues 364 to 384 (ILIYVTSCVLFILTMVIIILC) traverse the membrane as a helical segment. Residues 385 to 800 (RMWINTQKTL…HHHSNGVIRT (416 aa)) lie on the Cytoplasmic side of the membrane. A Protein kinase domain is found at 460-739 (LTLGKPLGEG…RQLVEDHDRV (280 aa)). ATP-binding positions include 466–474 (LGEGCFGQV) and Lys496. The Proton acceptor role is filled by Asp605. Tyr635, Tyr636, Tyr712, and Tyr748 each carry phosphotyrosine; by autocatalysis. The segment covering 764–773 (DSNSTCSSGD) has biased composition (polar residues). Positions 764 to 800 (DSNSTCSSGDDSVFAHDPLPEEPCLPKHHHSNGVIRT) are disordered.

Belongs to the protein kinase superfamily. Tyr protein kinase family. Fibroblast growth factor receptor subfamily. As to quaternary structure, monomer. Homodimer after ligand binding. In terms of processing, autophosphorylated. Binding of FGF family members together with heparan sulfate proteoglycan or heparin promotes receptor dimerization and autophosphorylation on tyrosine residues. Autophosphorylation occurs in trans between the two FGFR molecules present in the dimer.

Its subcellular location is the cell membrane. It catalyses the reaction L-tyrosyl-[protein] + ATP = O-phospho-L-tyrosyl-[protein] + ADP + H(+). Its activity is regulated as follows. Present in an inactive conformation in the absence of bound ligand. Ligand binding leads to dimerization and activation by autophosphorylation on tyrosine residues. Its function is as follows. Tyrosine-protein kinase that acts as a cell-surface receptor for fibroblast growth factors and plays an essential role in the regulation of cell proliferation, differentiation and apoptosis. Plays an essential role in the regulation of chondrocyte differentiation, proliferation and apoptosis, and is required for normal skeleton development. Regulates both osteogenesis and postnatal bone mineralization by osteoblasts. Promotes apoptosis in chondrocytes, but can also promote cancer cell proliferation. Phosphorylates PLCG1, CBL and FRS2. Ligand binding leads to the activation of several signaling cascades. Activation of PLCG1 leads to the production of the cellular signaling molecules diacylglycerol and inositol 1,4,5-trisphosphate. Phosphorylation of FRS2 triggers recruitment of GRB2, GAB1, PIK3R1 and SOS1, and mediates activation of RAS, MAPK1/ERK2, MAPK3/ERK1 and the MAP kinase signaling pathway, as well as of the AKT1 signaling pathway. The polypeptide is Fibroblast growth factor receptor 3 (fgfr3) (Danio rerio (Zebrafish)).